The primary structure comprises 475 residues: ATP synthase subunit beta (475 aa).

156–163 contacts ATP; that stretch reads GGAGVGKT.

The protein belongs to the ATPase alpha/beta chains family. As to quaternary structure, F-type ATPases have 2 components, CF(1) - the catalytic core - and CF(0) - the membrane proton channel. CF(1) has five subunits: alpha(3), beta(3), gamma(1), delta(1), epsilon(1). CF(0) has three main subunits: a(1), b(2) and c(9-12). The alpha and beta chains form an alternating ring which encloses part of the gamma chain. CF(1) is attached to CF(0) by a central stalk formed by the gamma and epsilon chains, while a peripheral stalk is formed by the delta and b chains.

Its subcellular location is the cell membrane. The catalysed reaction is ATP + H2O + 4 H(+)(in) = ADP + phosphate + 5 H(+)(out). Its function is as follows. Produces ATP from ADP in the presence of a proton gradient across the membrane. The catalytic sites are hosted primarily by the beta subunits. This is ATP synthase subunit beta from Mycoplasma pneumoniae (strain ATCC 29342 / M129 / Subtype 1) (Mycoplasmoides pneumoniae).